Here is a 130-residue protein sequence, read N- to C-terminus: Ribonuclease VapC46 (130 aa).

Positions 4 to 118 (IYLDSSAIVK…CTYDDRMRDA (115 aa)) constitute a PINc domain. The Mg(2+) site is built by Asp-7 and Asp-91.

This sequence belongs to the PINc/VapC protein family. The cofactor is Mg(2+).

Functionally, toxic component of a type II toxin-antitoxin (TA) system. An RNase. Upon expression in M.smegmatis inhibits colony formation. Its toxic effect is neutralized by coexpression with cognate antitoxin VapB46. The protein is Ribonuclease VapC46 of Mycobacterium tuberculosis (strain ATCC 25618 / H37Rv).